We begin with the raw amino-acid sequence, 172 residues long: Putative phosphoesterase BCE_1348 (172 aa).

The Proton donor role is filled by H34. Short sequence motifs (HXTX) lie at residues 34-37 (HITL) and 115-118 (HLTI). H115 functions as the Proton acceptor in the catalytic mechanism.

The protein belongs to the 2H phosphoesterase superfamily. YjcG family.

In Bacillus cereus (strain ATCC 10987 / NRS 248), this protein is Putative phosphoesterase BCE_1348.